We begin with the raw amino-acid sequence, 336 residues long: F420-dependent glucose-6-phosphate dehydrogenase (336 aa).

Asp-39 is a coenzyme F420-(gamma-Glu)n binding site. His-40 functions as the Proton donor in the catalytic mechanism. Residues Thr-76 and Ser-107–Gly-108 contribute to the coenzyme F420-(gamma-Glu)n site. Glu-109 serves as the catalytic Proton acceptor. Residues Asn-112, Gly-177 to Gly-178, and Val-180 to Val-181 each bind coenzyme F420-(gamma-Glu)n. Substrate-binding residues include Thr-195, Lys-198, Lys-259, and Arg-283.

The protein belongs to the F420-dependent glucose-6-phosphate dehydrogenase family. Homodimer.

It catalyses the reaction oxidized coenzyme F420-(gamma-L-Glu)(n) + D-glucose 6-phosphate + H(+) = 6-phospho-D-glucono-1,5-lactone + reduced coenzyme F420-(gamma-L-Glu)(n). In terms of biological role, catalyzes the coenzyme F420-dependent oxidation of glucose 6-phosphate (G6P) to 6-phosphogluconolactone. This chain is F420-dependent glucose-6-phosphate dehydrogenase, found in Tsukamurella paurometabola (strain ATCC 8368 / DSM 20162 / CCUG 35730 / CIP 100753 / JCM 10117 / KCTC 9821 / NBRC 16120 / NCIMB 702349 / NCTC 13040) (Corynebacterium paurometabolum).